A 202-amino-acid chain; its full sequence is Dephospho-CoA kinase (202 aa).

Positions 4 to 200 constitute a DPCK domain; it reads VVGVTGGIGS…QRYLAATVAQ (197 aa). 12–17 provides a ligand contact to ATP; it reads GSGKSA.

This sequence belongs to the CoaE family.

Its subcellular location is the cytoplasm. The enzyme catalyses 3'-dephospho-CoA + ATP = ADP + CoA + H(+). It functions in the pathway cofactor biosynthesis; coenzyme A biosynthesis; CoA from (R)-pantothenate: step 5/5. Its function is as follows. Catalyzes the phosphorylation of the 3'-hydroxyl group of dephosphocoenzyme A to form coenzyme A. The sequence is that of Dephospho-CoA kinase from Idiomarina loihiensis (strain ATCC BAA-735 / DSM 15497 / L2-TR).